The sequence spans 154 residues: SsrA-binding protein (154 aa).

It belongs to the SmpB family.

It localises to the cytoplasm. In terms of biological role, required for rescue of stalled ribosomes mediated by trans-translation. Binds to transfer-messenger RNA (tmRNA), required for stable association of tmRNA with ribosomes. tmRNA and SmpB together mimic tRNA shape, replacing the anticodon stem-loop with SmpB. tmRNA is encoded by the ssrA gene; the 2 termini fold to resemble tRNA(Ala) and it encodes a 'tag peptide', a short internal open reading frame. During trans-translation Ala-aminoacylated tmRNA acts like a tRNA, entering the A-site of stalled ribosomes, displacing the stalled mRNA. The ribosome then switches to translate the ORF on the tmRNA; the nascent peptide is terminated with the 'tag peptide' encoded by the tmRNA and targeted for degradation. The ribosome is freed to recommence translation, which seems to be the essential function of trans-translation. This chain is SsrA-binding protein, found in Staphylococcus saprophyticus subsp. saprophyticus (strain ATCC 15305 / DSM 20229 / NCIMB 8711 / NCTC 7292 / S-41).